We begin with the raw amino-acid sequence, 716 residues long: Fatty acid oxidation complex subunit alpha (716 aa).

Positions 1 to 189 (MIYQSPTIQV…KVGAIDAVVA (189 aa)) are enoyl-CoA hydratase/isomerase. Aspartate 296 is a binding site for substrate. The tract at residues 311-716 (KDVNQAAVLG…AANNGSYYQA (406 aa)) is 3-hydroxyacyl-CoA dehydrogenase. Residues methionine 324, aspartate 343, 400–402 (VVE), lysine 407, and serine 429 each bind NAD(+). Residue histidine 450 is the For 3-hydroxyacyl-CoA dehydrogenase activity of the active site. Asparagine 453 serves as a coordination point for NAD(+). Substrate contacts are provided by asparagine 500 and tyrosine 660.

In the N-terminal section; belongs to the enoyl-CoA hydratase/isomerase family. This sequence in the C-terminal section; belongs to the 3-hydroxyacyl-CoA dehydrogenase family. In terms of assembly, heterotetramer of two alpha chains (FadB) and two beta chains (FadA).

The catalysed reaction is a (3S)-3-hydroxyacyl-CoA + NAD(+) = a 3-oxoacyl-CoA + NADH + H(+). The enzyme catalyses a (3S)-3-hydroxyacyl-CoA = a (2E)-enoyl-CoA + H2O. It carries out the reaction a 4-saturated-(3S)-3-hydroxyacyl-CoA = a (3E)-enoyl-CoA + H2O. It catalyses the reaction (3S)-3-hydroxybutanoyl-CoA = (3R)-3-hydroxybutanoyl-CoA. The catalysed reaction is a (3Z)-enoyl-CoA = a 4-saturated (2E)-enoyl-CoA. The enzyme catalyses a (3E)-enoyl-CoA = a 4-saturated (2E)-enoyl-CoA. It functions in the pathway lipid metabolism; fatty acid beta-oxidation. Its function is as follows. Involved in the aerobic and anaerobic degradation of long-chain fatty acids via beta-oxidation cycle. Catalyzes the formation of 3-oxoacyl-CoA from enoyl-CoA via L-3-hydroxyacyl-CoA. It can also use D-3-hydroxyacyl-CoA and cis-3-enoyl-CoA as substrate. This chain is Fatty acid oxidation complex subunit alpha, found in Shewanella frigidimarina (strain NCIMB 400).